A 149-amino-acid polypeptide reads, in one-letter code: Large ribosomal subunit protein bL9 (149 aa).

The protein belongs to the bacterial ribosomal protein bL9 family.

In terms of biological role, binds to the 23S rRNA. This Tolumonas auensis (strain DSM 9187 / NBRC 110442 / TA 4) protein is Large ribosomal subunit protein bL9.